We begin with the raw amino-acid sequence, 52 residues long: Ribosome biogenesis protein Nop10 (52 aa).

It belongs to the NOP10 family.

In terms of biological role, involved in ribosome biogenesis; more specifically in 18S rRNA pseudouridylation and in cleavage of pre-rRNA. The polypeptide is Ribosome biogenesis protein Nop10 (Methanococcus vannielii (strain ATCC 35089 / DSM 1224 / JCM 13029 / OCM 148 / SB)).